We begin with the raw amino-acid sequence, 527 residues long: Putative ABC transporter peptide-binding protein BOV_A0352 (527 aa).

The N-terminal stretch at 1–23 (MRLRNFYSALALSAAVFAGPLYA) is a signal peptide.

It belongs to the bacterial solute-binding protein 5 family. The complex is composed of two ATP-binding proteins (BOV_A0347 and BOV_A0348), two transmembrane proteins (BOV_A0350 and BOV_A0351) and a solute-binding protein (BOV_A0352).

Its subcellular location is the periplasm. In terms of biological role, probably part of an ABC transporter complex that could be involved in peptide import. This is Putative ABC transporter peptide-binding protein BOV_A0352 from Brucella ovis (strain ATCC 25840 / 63/290 / NCTC 10512).